The primary structure comprises 316 residues: Retron Ec73 reverse transcriptase (316 aa).

One can recognise a Reverse transcriptase domain in the interval 1–243; the sequence is MRIYSLIDSQ…GSIVVTGLKV (243 aa). Mg(2+)-binding residues include Asp-99, Asp-189, and Asp-190. Residues 247–316 are necessary and required for recognition and binding of RNA; sequence FHITLHRSMK…WIQNLHNKVE (70 aa).

It belongs to the bacterial reverse transcriptase family.

The catalysed reaction is DNA(n) + a 2'-deoxyribonucleoside 5'-triphosphate = DNA(n+1) + diphosphate. Functionally, reverse transcriptase (RT) component of antiviral defense system retron Ec73, composed of a non-coding RNA (ncRNA) followed by a ribosyltransferase/DNA-binding protein then a reverse transcriptase (RT). Expression of this retron confers protection against bacteriophages SECphi4, SECphi6, SECphi27 and P1. At multiplicity of infection (MOI) of 0.02 cultures grow normally when infected with SECphi4 without collapsing, at MOI 2 cultures enter growth stasis. Responsible for synthesis of msDNA-Ec73 (a branched molecule with RNA linked by a 2',5'-phosphodiester bond to ssDNA). The retron transcript serves as primer (from a conserved internal G residue) and template for the reaction, and codes for the RT. Recognizes only its cognate RNA as a primer template. The chain is Retron Ec73 reverse transcriptase from Escherichia coli.